We begin with the raw amino-acid sequence, 686 residues long: DNA topoisomerase 1 (686 aa).

The Toprim domain occupies 1-141 (MILIIAEKPN…KRMKFSALTK (141 aa)). 2 residues coordinate Mg(2+): E7 and D107. One can recognise a Topo IA-type catalytic domain in the interval 156-574 (NFGMANAGIA…EAKERLTKIL (419 aa)). Residues 196 to 201 (STGRVQ) form an interaction with DNA region. Residue Y317 is the O-(5'-phospho-DNA)-tyrosine intermediate of the active site. Residues 606 to 634 (CPKCGGDLIVKYNKKTGKRFVGCSNWPKC) form a C4-type 1 zinc finger. Residues 653-678 (CCNGAPVVIIREEDGREFEICLDINC) form a C4-type 2; atypical zinc finger.

It belongs to the type IA topoisomerase family. As to quaternary structure, monomer. Mg(2+) is required as a cofactor.

The enzyme catalyses ATP-independent breakage of single-stranded DNA, followed by passage and rejoining.. In terms of biological role, releases the supercoiling and torsional tension of DNA, which is introduced during the DNA replication and transcription, by transiently cleaving and rejoining one strand of the DNA duplex. Introduces a single-strand break via transesterification at a target site in duplex DNA. The scissile phosphodiester is attacked by the catalytic tyrosine of the enzyme, resulting in the formation of a DNA-(5'-phosphotyrosyl)-enzyme intermediate and the expulsion of a 3'-OH DNA strand. The free DNA strand then undergoes passage around the unbroken strand, thus removing DNA supercoils. Finally, in the religation step, the DNA 3'-OH attacks the covalent intermediate to expel the active-site tyrosine and restore the DNA phosphodiester backbone. This chain is DNA topoisomerase 1, found in Pyrococcus horikoshii (strain ATCC 700860 / DSM 12428 / JCM 9974 / NBRC 100139 / OT-3).